The sequence spans 193 residues: 3-isopropylmalate dehydratase small subunit (193 aa).

It belongs to the LeuD family. LeuD type 1 subfamily. In terms of assembly, heterodimer of LeuC and LeuD.

The enzyme catalyses (2R,3S)-3-isopropylmalate = (2S)-2-isopropylmalate. It functions in the pathway amino-acid biosynthesis; L-leucine biosynthesis; L-leucine from 3-methyl-2-oxobutanoate: step 2/4. Catalyzes the isomerization between 2-isopropylmalate and 3-isopropylmalate, via the formation of 2-isopropylmaleate. This is 3-isopropylmalate dehydratase small subunit from Bacillus cytotoxicus (strain DSM 22905 / CIP 110041 / 391-98 / NVH 391-98).